Here is a 332-residue protein sequence, read N- to C-terminus: T-cell surface glycoprotein CD1c2 (332 aa).

Positions 1–17 are cleaved as a signal peptide; the sequence is MLFLQFLFVDVVLGGSI. The Extracellular portion of the chain corresponds to 18-300; the sequence is TENVVQENIS…IILYWGHGLS (283 aa). N-linked (GlcNAc...) asparagine glycans are attached at residues Asn-25, Asn-38, and Asn-75. 2 disulfide bridges follow: Cys-120–Cys-184 and Cys-224–Cys-279. Residues 205–292 form the Ig-like domain; it reads PEVWLSSSPN…HSSLRDQDII (88 aa). The chain crosses the membrane as a helical span at residues 301 to 321; that stretch reads VILIALAVIVPLVLLIVLVLL. The Cytoplasmic segment spans residues 322-332; that stretch reads CKKRCTYQGIP.

As to quaternary structure, heterodimer with B2M (beta-2-microglobulin).

The protein localises to the cell membrane. It is found in the endosome membrane. Functionally, antigen-presenting protein that binds self and non-self lipid and glycolipid antigens and presents them to T-cell receptors on natural killer T-cells. The sequence is that of T-cell surface glycoprotein CD1c2 (CD1C2) from Cavia porcellus (Guinea pig).